We begin with the raw amino-acid sequence, 334 residues long: Glycerol-3-phosphate dehydrogenase [NAD(P)+] (334 aa).

NADPH-binding residues include W13, R33, and K106. Positions 106, 137, and 139 each coordinate sn-glycerol 3-phosphate. NADPH is bound at residue A141. Positions 192, 245, 255, 256, and 257 each coordinate sn-glycerol 3-phosphate. K192 acts as the Proton acceptor in catalysis. R256 is an NADPH binding site. NADPH-binding residues include V280 and E282.

The protein belongs to the NAD-dependent glycerol-3-phosphate dehydrogenase family.

It is found in the cytoplasm. It carries out the reaction sn-glycerol 3-phosphate + NAD(+) = dihydroxyacetone phosphate + NADH + H(+). It catalyses the reaction sn-glycerol 3-phosphate + NADP(+) = dihydroxyacetone phosphate + NADPH + H(+). Its pathway is membrane lipid metabolism; glycerophospholipid metabolism. In terms of biological role, catalyzes the reduction of the glycolytic intermediate dihydroxyacetone phosphate (DHAP) to sn-glycerol 3-phosphate (G3P), the key precursor for phospholipid synthesis. This chain is Glycerol-3-phosphate dehydrogenase [NAD(P)+], found in Chlamydia trachomatis serovar A (strain ATCC VR-571B / DSM 19440 / HAR-13).